Consider the following 35-residue polypeptide: Photosystem II reaction center protein T (35 aa).

A helical transmembrane segment spans residues A3–F23.

Belongs to the PsbT family. As to quaternary structure, PSII is composed of 1 copy each of membrane proteins PsbA, PsbB, PsbC, PsbD, PsbE, PsbF, PsbH, PsbI, PsbJ, PsbK, PsbL, PsbM, PsbT, PsbY, PsbZ, Psb30/Ycf12, at least 3 peripheral proteins of the oxygen-evolving complex and a large number of cofactors. It forms dimeric complexes.

The protein resides in the plastid. It is found in the chloroplast thylakoid membrane. Found at the monomer-monomer interface of the photosystem II (PS II) dimer, plays a role in assembly and dimerization of PSII. PSII is a light-driven water plastoquinone oxidoreductase, using light energy to abstract electrons from H(2)O, generating a proton gradient subsequently used for ATP formation. This chain is Photosystem II reaction center protein T, found in Cabomba caroliniana (Carolina fanwort).